Here is a 226-residue protein sequence, read N- to C-terminus: Endonuclease V (226 aa).

Mg(2+)-binding residues include Asp-42 and Asp-110.

Belongs to the endonuclease V family. Mg(2+) is required as a cofactor.

The protein resides in the cytoplasm. The enzyme catalyses Endonucleolytic cleavage at apurinic or apyrimidinic sites to products with a 5'-phosphate.. Functionally, DNA repair enzyme involved in the repair of deaminated bases. Selectively cleaves double-stranded DNA at the second phosphodiester bond 3' to a deoxyinosine leaving behind the intact lesion on the nicked DNA. This chain is Endonuclease V, found in Thermus thermophilus (strain ATCC BAA-163 / DSM 7039 / HB27).